The sequence spans 163 residues: ATP synthase subunit delta, mitochondrial (163 aa).

A mitochondrion-targeting transit peptide spans 1 to 18 (MLARTIQRFSVVAKRGYA).

The protein belongs to the ATPase epsilon chain family. Subunit of the F-type ATPase which has 2 components, CF(1) - the catalytic core - and CF(0) - the membrane proton channel.

The protein resides in the mitochondrion. It is found in the mitochondrion inner membrane. Mitochondrial membrane ATP synthase (F(1)F(0) ATP synthase or Complex V) produces ATP from ADP in the presence of a proton gradient across the membrane which is generated by electron transport complexes of the respiratory chain. F-type ATPases consist of two structural domains, F(1) - containing the extramembraneous catalytic core, and F(0) - containing the membrane proton channel, linked together by a central stalk and a peripheral stalk. During catalysis, ATP turnover in the catalytic domain of F(1) is coupled via a rotary mechanism of the central stalk subunits to proton translocation. Part of the complex F(1) domain and of the central stalk which is part of the complex rotary element. The protein is ATP synthase subunit delta, mitochondrial of Caenorhabditis elegans.